A 187-amino-acid chain; its full sequence is Phosphatidylethanolamine-binding protein 2 (187 aa).

Ser-13, Ser-52, and Ser-54 each carry phosphoserine.

The protein belongs to the phosphatidylethanolamine-binding protein family. As to expression, testis specific.

Its subcellular location is the cytoplasm. May bind to phospholipids. May act as serine protease inhibitor. The sequence is that of Phosphatidylethanolamine-binding protein 2 (Pbp2) from Mus musculus (Mouse).